A 195-amino-acid polypeptide reads, in one-letter code: Protein GrpE (195 aa).

The tract at residues 1–30 (MSEQEKVEQEEISAELETQNEQEKPMEETE) is disordered. A compositionally biased stretch (acidic residues) spans 10 to 20 (EEISAELETQN).

The protein belongs to the GrpE family. In terms of assembly, homodimer.

Its subcellular location is the cytoplasm. Functionally, participates actively in the response to hyperosmotic and heat shock by preventing the aggregation of stress-denatured proteins, in association with DnaK and GrpE. It is the nucleotide exchange factor for DnaK and may function as a thermosensor. Unfolded proteins bind initially to DnaJ; upon interaction with the DnaJ-bound protein, DnaK hydrolyzes its bound ATP, resulting in the formation of a stable complex. GrpE releases ADP from DnaK; ATP binding to DnaK triggers the release of the substrate protein, thus completing the reaction cycle. Several rounds of ATP-dependent interactions between DnaJ, DnaK and GrpE are required for fully efficient folding. In Histophilus somni (strain 2336) (Haemophilus somnus), this protein is Protein GrpE.